We begin with the raw amino-acid sequence, 273 residues long: Dermonecrotic toxin LdSicTox-alphaIB3avi (273 aa).

The active site involves His5. The Mg(2+) site is built by Glu25 and Asp27. The active-site Nucleophile is the His41. Cystine bridges form between Cys45–Cys51 and Cys47–Cys190. A Mg(2+)-binding site is contributed by Asp85.

This sequence belongs to the arthropod phospholipase D family. Class II subfamily. Requires Mg(2+) as cofactor. In terms of tissue distribution, expressed by the venom gland.

It is found in the secreted. It catalyses the reaction an N-(acyl)-sphingosylphosphocholine = an N-(acyl)-sphingosyl-1,3-cyclic phosphate + choline. It carries out the reaction an N-(acyl)-sphingosylphosphoethanolamine = an N-(acyl)-sphingosyl-1,3-cyclic phosphate + ethanolamine. The catalysed reaction is a 1-acyl-sn-glycero-3-phosphocholine = a 1-acyl-sn-glycero-2,3-cyclic phosphate + choline. The enzyme catalyses a 1-acyl-sn-glycero-3-phosphoethanolamine = a 1-acyl-sn-glycero-2,3-cyclic phosphate + ethanolamine. Dermonecrotic toxins cleave the phosphodiester linkage between the phosphate and headgroup of certain phospholipids (sphingolipid and lysolipid substrates), forming an alcohol (often choline) and a cyclic phosphate. This toxin acts on sphingomyelin (SM). It may also act on ceramide phosphoethanolamine (CPE), lysophosphatidylcholine (LPC) and lysophosphatidylethanolamine (LPE), but not on lysophosphatidylserine (LPS), and lysophosphatidylglycerol (LPG). It acts by transphosphatidylation, releasing exclusively cyclic phosphate products as second products. Induces dermonecrosis, hemolysis, increased vascular permeability, edema, inflammatory response, and platelet aggregation. The polypeptide is Dermonecrotic toxin LdSicTox-alphaIB3avi (Loxosceles deserta (Desert recluse spider)).